Consider the following 320-residue polypeptide: D-amino-acid oxidase (320 aa).

Residues Gly18, Gly19, Val20, Ile21, Thr47, Thr48, Ser49, Gly53, Gly54, Leu55, Val161, and Thr176 each contribute to the FAD site. Tyr220 and Arg275 together coordinate D-proline. Residues Tyr220 and Arg275 each contribute to the D-serine site. FAD is bound by residues Arg275, Gly301, Gly302, Gly304, and Thr306. Residue Gly302 coordinates D-proline. Gly302 is a binding site for D-serine.

Belongs to the DAMOX/DASOX family. It depends on FAD as a cofactor.

The protein resides in the cytoplasm. Its subcellular location is the secreted. It is found in the cell wall. It carries out the reaction a D-alpha-amino acid + O2 + H2O = a 2-oxocarboxylate + H2O2 + NH4(+). The enzyme catalyses D-leucine + O2 + H2O = 4-methyl-2-oxopentanoate + H2O2 + NH4(+). It catalyses the reaction D-valine + O2 + H2O = 3-methyl-2-oxobutanoate + H2O2 + NH4(+). The catalysed reaction is D-isoleucine + O2 + H2O = (R)-3-methyl-2-oxopentanoate + H2O2 + NH4(+). It carries out the reaction D-methionine + O2 + H2O = 4-methylsulfanyl-2-oxobutanoate + H2O2 + NH4(+). Functionally, catalyzes the oxidative deamination of D-amino acids with broad substrate specificity. The chain is D-amino-acid oxidase from Streptomyces coelicolor (strain ATCC BAA-471 / A3(2) / M145).